The chain runs to 176 residues: ATP synthase subunit delta (176 aa).

It belongs to the ATPase delta chain family. F-type ATPases have 2 components, F(1) - the catalytic core - and F(0) - the membrane proton channel. F(1) has five subunits: alpha(3), beta(3), gamma(1), delta(1), epsilon(1). F(0) has three main subunits: a(1), b(2) and c(10-14). The alpha and beta chains form an alternating ring which encloses part of the gamma chain. F(1) is attached to F(0) by a central stalk formed by the gamma and epsilon chains, while a peripheral stalk is formed by the delta and b chains.

The protein resides in the cell inner membrane. F(1)F(0) ATP synthase produces ATP from ADP in the presence of a proton or sodium gradient. F-type ATPases consist of two structural domains, F(1) containing the extramembraneous catalytic core and F(0) containing the membrane proton channel, linked together by a central stalk and a peripheral stalk. During catalysis, ATP synthesis in the catalytic domain of F(1) is coupled via a rotary mechanism of the central stalk subunits to proton translocation. Functionally, this protein is part of the stalk that links CF(0) to CF(1). It either transmits conformational changes from CF(0) to CF(1) or is implicated in proton conduction. In Campylobacter concisus (strain 13826), this protein is ATP synthase subunit delta.